The sequence spans 503 residues: MSQLKLEEISSVIEEKIKNFELDCDMAEVGKVVSYADGVAKIYGLNGVMSYEVLEFETGDKGVAANLEEDSVGVIVFGFGNNIKEGTSVKRTKSLMKVPVGDAVVGRVLNALGEPIDGKGEIETNEFSLIEQKAPGIMDRKSVHEPLQTGIKAIDALVPIGRGQRELIIGDKQTGKTTVAIDAIINQKGQNVICIYVAIGQKESTVAQVVRKLEEYGAMEYSVVINASASDSAAMQYLAPYAGVAMGEYFRDHARHALIVYDDLSKHAVAYREISWILRRPPGREAFPGDVFYIHSRLLERAAKLCDEKGAGSLTALPIVETQAGDVSAYIPTNIISITDGQIFLETDLFYSGIRPAINVGLSVSRVGGAAQIKATKQVSGTLRLDLAQYRELQAFTQFASDLDEASKKQLERGQRMVEVLKQAPYSPLPIEKQVVIIYAGAKGFLDSVSVKKVVDFEEQLHPFLEAKYPQVLEEIHTKKVLDKDLEAMLRKVLEEFKLTYSE.

Position 170-177 (170-177 (GDKQTGKT)) interacts with ATP.

This sequence belongs to the ATPase alpha/beta chains family. As to quaternary structure, F-type ATPases have 2 components, CF(1) - the catalytic core - and CF(0) - the membrane proton channel. CF(1) has five subunits: alpha(3), beta(3), gamma(1), delta(1), epsilon(1). CF(0) has three main subunits: a(1), b(2) and c(9-12). The alpha and beta chains form an alternating ring which encloses part of the gamma chain. CF(1) is attached to CF(0) by a central stalk formed by the gamma and epsilon chains, while a peripheral stalk is formed by the delta and b chains.

Its subcellular location is the cell inner membrane. It carries out the reaction ATP + H2O + 4 H(+)(in) = ADP + phosphate + 5 H(+)(out). Its function is as follows. Produces ATP from ADP in the presence of a proton gradient across the membrane. The alpha chain is a regulatory subunit. The protein is ATP synthase subunit alpha of Helicobacter pylori (strain J99 / ATCC 700824) (Campylobacter pylori J99).